We begin with the raw amino-acid sequence, 386 residues long: Coproporphyrinogen-III oxidase 1, chloroplastic (386 aa).

Residues 1–48 (MASHSSTLLSSPTFAPFSSHRLHYSPNPSTLRFSRPIRNKPNLALRCS) constitute a chloroplast transit peptide. Residues 125-134 (VLQDGNVFEK) form an important for dimerization region. Serine 174 provides a ligand contact to substrate. The Proton donor role is filled by histidine 188. Substrate contacts are provided by residues 190-192 (NYR) and 344-349 (GGRIES). The tract at residues 326 to 361 (YVEFNLVYDRGTTFGLKTGGRIESILVSLPLSARWE) is important for dimerization.

The protein belongs to the aerobic coproporphyrinogen-III oxidase family. As to quaternary structure, homodimer. As to expression, expressed in cotyledons, leaves and roots.

Its subcellular location is the plastid. The protein localises to the chloroplast. The catalysed reaction is coproporphyrinogen III + O2 + 2 H(+) = protoporphyrinogen IX + 2 CO2 + 2 H2O. It participates in porphyrin-containing compound metabolism; protoporphyrin-IX biosynthesis; protoporphyrinogen-IX from coproporphyrinogen-III (O2 route): step 1/1. Its pathway is porphyrin-containing compound metabolism; chlorophyll biosynthesis. Its function is as follows. Key enzyme in heme biosynthesis. Catalyzes the oxidative decarboxylation of propionic acid side chains of rings A and B of coproporphyrinogen III. This chain is Coproporphyrinogen-III oxidase 1, chloroplastic (CPX1), found in Arabidopsis thaliana (Mouse-ear cress).